The sequence spans 509 residues: Protein WHAT'S THIS FACTOR 1 homolog, chloroplastic (509 aa).

The transit peptide at 1–56 (MDAKLLLLPFPSPPATLHHHPPPPKSLFLGASLPLLHPPPPLRLLRPGAPRRLAVV) directs the protein to the chloroplast. Residues 65 to 393 (KEIPFDNVIQ…LKEKMRALVA (329 aa)) enclose the PORR domain. Disordered regions lie at residues 402-431 (VPAT…DEDE) and 444-509 (SGGK…RERW). Positions 461-474 (ENDDSPPDFEDDDG) are enriched in acidic residues.

It is found in the plastid. The protein localises to the chloroplast. Functionally, RNA-binding protein involved in group II intron splicing. Binds specific group II introns and promotes their splicing. Functions in the context of a heterodimer with the ribonuclease III domain-containing protein RNC1. This is Protein WHAT'S THIS FACTOR 1 homolog, chloroplastic from Oryza sativa subsp. japonica (Rice).